The sequence spans 292 residues: Mitochondrial fission regulator 1-like (292 aa).

Threonine 30 carries the phosphothreonine modification. Serine 41 carries the phosphoserine modification. Serine 103 bears the Phosphoserine; by AMPK mark. Serine 110, serine 224, and serine 225 each carry phosphoserine. Serine 238 is subject to Phosphoserine; by AMPK. Phosphoserine is present on residues serine 261 and serine 273.

The protein belongs to the MTFR1 family. Phosphorylated by AMPK. Upon stress, phosphorylation at Ser-103 and Ser-238 by AMPK is sufficient to induce mitochondrial fragmentation.

The protein resides in the mitochondrion outer membrane. Its function is as follows. Mitochondrial protein required for adaptation of miochondrial dynamics to metabolic changes. Regulates mitochondrial morphology at steady state and mediates AMPK-dependent stress-induced mitochondrial fragmentation via the control of OPA1 levels. The polypeptide is Mitochondrial fission regulator 1-like (Homo sapiens (Human)).